Reading from the N-terminus, the 402-residue chain is Protein HAIKU1 (402 aa).

4 disordered regions span residues 1 to 44 (MDRP…LQTQ), 63 to 135 (TGSP…QQPM), 160 to 266 (SSLG…LVPS), and 346 to 402 (QPLT…WNDY). The span at 24–44 (LHQSTFAASTSNGAAPRLQTQ) shows a compositional bias: polar residues. The VQ motif lies at 55–64 (FRSIVQQLTG). Residues 76 to 87 (QNNSLRPQNTRL) are compositionally biased toward polar residues. Residues 103–113 (VPLPSMAPPQS) show a composition bias toward pro residues. The segment covering 160–173 (SSLGDSGPNANQMQ) has biased composition (polar residues). Positions 218 to 240 (MPAQSQSQSQPQPQPQPQQHMMP) are enriched in low complexity. Residues 257 to 266 (YLPPPGLVPS) are compositionally biased toward pro residues. A compositionally biased stretch (polar residues) spans 349–358 (TPNFSFSQIA). Positions 371-380 (QGPPQPPPSP) are enriched in pro residues. Over residues 381–390 (GLMFPLSPSG) the composition is skewed to low complexity.

As to quaternary structure, interacts with WRKY10. Interacts with MPK6.

The protein resides in the nucleus. Functionally, modulates seed size by negatively regulating the cellularization of syncytial endosperm. May function by binding and modulating the activity of WRKY10 transcription factor. This chain is Protein HAIKU1, found in Arabidopsis thaliana (Mouse-ear cress).